We begin with the raw amino-acid sequence, 629 residues long: Phosphoglucomutase, chloroplastic (629 aa).

Residues 1–69 constitute a chloroplast transit peptide; it reads MSSTYARFDT…SSSSGPIIAG (69 aa). Arginine 94 and serine 187 together coordinate alpha-D-glucose 1,6-bisphosphate. Serine 187 acts as the Phosphoserine intermediate in catalysis. Serine 187, aspartate 352, aspartate 354, and aspartate 356 together coordinate Mg(2+). Serine 187 is subject to Phosphoserine. Residues aspartate 356, arginine 357, threonine 420, glutamate 439, serine 441, and lysine 452 each contribute to the alpha-D-glucose 1,6-bisphosphate site.

It belongs to the phosphohexose mutase family. As to quaternary structure, monomer. The cofactor is Mg(2+).

The protein resides in the plastid. The protein localises to the chloroplast. The catalysed reaction is alpha-D-glucose 1-phosphate = alpha-D-glucose 6-phosphate. It carries out the reaction O-phospho-L-seryl-[protein] + alpha-D-glucose 1-phosphate = alpha-D-glucose 1,6-bisphosphate + L-seryl-[protein]. It catalyses the reaction alpha-D-glucose 1,6-bisphosphate + L-seryl-[protein] = O-phospho-L-seryl-[protein] + alpha-D-glucose 6-phosphate. With respect to regulation, inhibited by the Calvin cycle intermediates fructose-1,6-bisphosphate and ribulose-1,5-bisphosphate. Its function is as follows. Catalyzes the reversible isomerization of alpha-D-glucose 1-phosphate to alpha-D-glucose 6-phosphate. The mechanism proceeds via the intermediate compound alpha-D-glucose 1,6-bisphosphate. This enzyme participates in both the breakdown and synthesis of glucose. This Brassica napus (Rape) protein is Phosphoglucomutase, chloroplastic (PGMP).